An 86-amino-acid chain; its full sequence is ATP synthase epsilon chain (86 aa).

Belongs to the ATPase epsilon chain family. As to quaternary structure, F-type ATPases have 2 components, CF(1) - the catalytic core - and CF(0) - the membrane proton channel. CF(1) has five subunits: alpha(3), beta(3), gamma(1), delta(1), epsilon(1). CF(0) has three main subunits: a, b and c.

The protein localises to the cell inner membrane. Produces ATP from ADP in the presence of a proton gradient across the membrane. This Caulobacter vibrioides (strain ATCC 19089 / CIP 103742 / CB 15) (Caulobacter crescentus) protein is ATP synthase epsilon chain (atpC).